The sequence spans 163 residues: Arginine repressor (163 aa).

The protein belongs to the ArgR family.

It localises to the cytoplasm. The protein operates within amino-acid biosynthesis; L-arginine biosynthesis [regulation]. Regulates arginine biosynthesis genes. The polypeptide is Arginine repressor (Corynebacterium diphtheriae (strain ATCC 700971 / NCTC 13129 / Biotype gravis)).